Consider the following 621-residue polypeptide: Growth factor receptor-bound protein 10 (621 aa).

Composition is skewed to polar residues over residues 1–23 (MNNDINSSVESLNSACNMQSDTD) and 33–59 (HASNQGAASSSRGQPQASPRQKMQRSQ). Positions 1-118 (MNNDINSSVE…PSQPPAKHCG (118 aa)) are disordered. Residues serine 50 and serine 96 each carry the phosphoserine modification. Pro residues predominate over residues 95–112 (GSPPSVAPSSLPPPPSQP). The Ras-associating domain maps to 194 to 278 (LRKDVKVFSE…SKFLFRKNYA (85 aa)). The PH domain maps to 318–427 (CPEIQGFLQV…WMTAFRLLKY (110 aa)). Phosphoserine; by MTOR and PKB/AKT1 is present on serine 455. Residues serine 458 and serine 503 each carry the phosphoserine modification. The 82-residue stretch at 520 to 601 (WFHGRISREE…SDLIQLVDFY (82 aa)) folds into the SH2 domain.

Belongs to the GRB7/10/14 family. As to quaternary structure, interacts with ligand-activated tyrosine kinase receptors, including FGFR1, INSR, IGF1R, MET and PDGFRB in a phosphotyrosine-dependent manner through the SH2 domain. Poorly binds to the EGFR. Directly interacts with MAP3K14/NIK and is recruited to the EGFR-ERBB2 complex. Interacts with GIGYF1/PERQ1 and GIGYF2/TNRC15. When unphosphorylated, interacts with AKT1 and when phosphorylated with YWHAE/14-3-3 epsilon. Interacts with NEDD4. Interacts with LRP6, thus interfering with the binding of AXIN1 to LRP6. Binds to activated NRAS. Post-translationally, phosphorylated on serine residues upon EGF, FGF and PDGF stimulation. Widely expressed.

Its subcellular location is the cytoplasm. Its activity is regulated as follows. Phosphorylation by mTORC1 stabilizes and activates GRB10 constituting a feedback pathway by which mTORC1 inhibits INSR-dependent signaling. Functionally, adapter protein which modulates coupling of a number of cell surface receptor kinases with specific signaling pathways. Binds to, and suppress signals from, activated receptors tyrosine kinases, including the insulin (INSR) and insulin-like growth factor (IGF1R) receptors. The inhibitory effect can be achieved by 2 mechanisms: interference with the signaling pathway and increased receptor degradation. Delays and reduces AKT1 phosphorylation in response to insulin stimulation. Blocks association between INSR and IRS1 and IRS2 and prevents insulin-stimulated IRS1 and IRS2 tyrosine phosphorylation. Recruits NEDD4 to IGF1R, leading to IGF1R ubiquitination, increased internalization and degradation by both the proteasomal and lysosomal pathways. A similar role in the mediation of ubiquitination also has been suggested with INSR. Negatively regulates Wnt signaling by interacting with LRP6 intracellular portion and interfering with the binding of AXIN1 to LRP6. Positive regulator of the KDR/VEGFR-2 signaling pathway. May inhibit NEDD4-mediated degradation of KDR/VEGFR-2. This is Growth factor receptor-bound protein 10 (Grb10) from Mus musculus (Mouse).